The chain runs to 158 residues: 2-C-methyl-D-erythritol 2,4-cyclodiphosphate synthase (158 aa).

A divalent metal cation is bound by residues aspartate 8 and histidine 10. 4-CDP-2-C-methyl-D-erythritol 2-phosphate contacts are provided by residues 8–10 (DVH) and 34–35 (HS). A divalent metal cation is bound at residue histidine 42. 4-CDP-2-C-methyl-D-erythritol 2-phosphate-binding positions include 56 to 58 (DIG), 61 to 65 (FPDTD), 100 to 106 (AQKPKML), 132 to 135 (TTEE), phenylalanine 139, and lysine 142.

Belongs to the IspF family. Homotrimer. It depends on a divalent metal cation as a cofactor.

The catalysed reaction is 4-CDP-2-C-methyl-D-erythritol 2-phosphate = 2-C-methyl-D-erythritol 2,4-cyclic diphosphate + CMP. It functions in the pathway isoprenoid biosynthesis; isopentenyl diphosphate biosynthesis via DXP pathway; isopentenyl diphosphate from 1-deoxy-D-xylulose 5-phosphate: step 4/6. In terms of biological role, involved in the biosynthesis of isopentenyl diphosphate (IPP) and dimethylallyl diphosphate (DMAPP), two major building blocks of isoprenoid compounds. Catalyzes the conversion of 4-diphosphocytidyl-2-C-methyl-D-erythritol 2-phosphate (CDP-ME2P) to 2-C-methyl-D-erythritol 2,4-cyclodiphosphate (ME-CPP) with a corresponding release of cytidine 5-monophosphate (CMP). The chain is 2-C-methyl-D-erythritol 2,4-cyclodiphosphate synthase from Clostridium tetani (strain Massachusetts / E88).